The following is a 545-amino-acid chain: CTP synthase (545 aa).

Residues 1–267 (MTKFIFVTGG…AEQVLNLLQM (267 aa)) form an amidoligase domain region. Ser13 serves as a coordination point for CTP. UTP is bound at residue Ser13. ATP is bound by residues 14–19 (SIGKGI) and Asp71. Positions 71 and 141 each coordinate Mg(2+). CTP is bound by residues 148–150 (DIE), 188–193 (KTKPTQ), and Lys224. UTP-binding positions include 188–193 (KTKPTQ) and Lys224. A Glutamine amidotransferase type-1 domain is found at 292–534 (EIAIVGKYVQ…IQAAIALSLS (243 aa)). Gly354 lines the L-glutamine pocket. Cys381 serves as the catalytic Nucleophile; for glutamine hydrolysis. L-glutamine contacts are provided by residues 382-385 (LGMQ), Glu405, and Arg462. Catalysis depends on residues His507 and Glu509.

It belongs to the CTP synthase family. As to quaternary structure, homotetramer.

It carries out the reaction UTP + L-glutamine + ATP + H2O = CTP + L-glutamate + ADP + phosphate + 2 H(+). It catalyses the reaction L-glutamine + H2O = L-glutamate + NH4(+). The catalysed reaction is UTP + NH4(+) + ATP = CTP + ADP + phosphate + 2 H(+). The protein operates within pyrimidine metabolism; CTP biosynthesis via de novo pathway; CTP from UDP: step 2/2. With respect to regulation, allosterically activated by GTP, when glutamine is the substrate; GTP has no effect on the reaction when ammonia is the substrate. The allosteric effector GTP functions by stabilizing the protein conformation that binds the tetrahedral intermediate(s) formed during glutamine hydrolysis. Inhibited by the product CTP, via allosteric rather than competitive inhibition. Functionally, catalyzes the ATP-dependent amination of UTP to CTP with either L-glutamine or ammonia as the source of nitrogen. Regulates intracellular CTP levels through interactions with the four ribonucleotide triphosphates. This chain is CTP synthase, found in Nostoc punctiforme (strain ATCC 29133 / PCC 73102).